Consider the following 475-residue polypeptide: Phenolic acid decarboxylase (475 aa).

Asn161, His183, and Glu225 together coordinate Mn(2+). Residues 161–166 (NVGIYR) and 182–183 (MH) each bind prenylated FMN. Glu274 serves as the catalytic Proton donor.

The protein belongs to the UbiD family. YclC subfamily. It depends on prenylated FMN as a cofactor. The cofactor is Mn(2+).

It carries out the reaction 4-hydroxybenzoate + H(+) = phenol + CO2. The catalysed reaction is vanillate + H(+) = guaiacol + CO2. Functionally, involved in the non-oxidative decarboxylation and detoxification of phenolic derivatives under both aerobic and anaerobic conditions. Phenolic acid decarboxylase that catalyzes the reversible decarboxylation of 4-hydroxybenzoate and vanillate. The sequence is that of Phenolic acid decarboxylase from Escherichia coli O157:H7.